The following is a 114-amino-acid chain: NADH dehydrogenase [ubiquinone] 1 subunit C2, isoform 2 (114 aa).

The helical transmembrane segment at 56–75 threads the bilayer; it reads GLHRQLLYITAFFFAGYYLV.

The protein belongs to the complex I NDUFC2 subunit family. As to quaternary structure, complex I is composed of 45 different subunits.

It is found in the mitochondrion inner membrane. In terms of biological role, accessory subunit of the mitochondrial membrane respiratory chain NADH dehydrogenase (Complex I), that is believed not to be involved in catalysis. Complex I functions in the transfer of electrons from NADH to the respiratory chain. The immediate electron acceptor for the enzyme is believed to be ubiquinone. The polypeptide is NADH dehydrogenase [ubiquinone] 1 subunit C2, isoform 2 (NDUFC2-KCTD14) (Homo sapiens (Human)).